The chain runs to 747 residues: Putative T-box protein 31 (747 aa).

The segment at residues 33-199 (QMLTKRKKTN…AGPAAKKTPD (167 aa)) is a DNA-binding region (T-box). Disordered regions lie at residues 268–289 (SLSSPAALKHDSTVSSDSDFDD) and 332–364 (SINNPGYLSTASSPAALNQDSSASEKSSIVRDK). Residues 332 to 358 (SINNPGYLSTASSPAALNQDSSASEKS) are compositionally biased toward polar residues.

The protein localises to the nucleus. This chain is Putative T-box protein 31 (tbx-31), found in Caenorhabditis elegans.